Reading from the N-terminus, the 453-residue chain is Tetrahydroanabasine acetyltransferase (453 aa).

Catalysis depends on proton acceptor residues H163 and D388.

This sequence belongs to the plant acyltransferase family. As to quaternary structure, monomer.

The enzyme catalyses tetrahydroanabasine + acetyl-CoA = ammodendrine + CoA. Its pathway is alkaloid biosynthesis. In terms of biological role, tetrahydroanabasine acetyltransferase involved in the accumulation of quinolizidine type antinutritional alkaloids (QAs). QAs impart a bitter taste to plants, acting as repellents and toxicants for herbivores and predators, and possess a variety of pharmacological effects, including sedative, anticonvulsant, anti-inflammatory, antiviral, antitumor, antipyretic, anti-hepatitis B, antifibrotic, antiallergic, antidiarrheal, analgesic and antimicrobial activities. Mediates the conversion of tetrahydroanabasine into ammodendrine. The protein is Tetrahydroanabasine acetyltransferase of Lupinus angustifolius (Narrow-leaved blue lupine).